Reading from the N-terminus, the 594-residue chain is Adenine deaminase 1 (594 aa).

Belongs to the metallo-dependent hydrolases superfamily. Adenine deaminase family. The cofactor is Mn(2+).

The catalysed reaction is adenine + H2O + H(+) = hypoxanthine + NH4(+). The protein is Adenine deaminase 1 of Latilactobacillus sakei subsp. sakei (strain 23K) (Lactobacillus sakei subsp. sakei).